A 449-amino-acid polypeptide reads, in one-letter code: Early 53 kDa protein (449 aa).

The disordered stretch occupies residues 1 to 68; the sequence is MNRFFRENNI…CTSPAKPLEH (68 aa). The span at 31–42 shows a compositional bias: pro residues; that stretch reads NSPPSPVRPPPK. The segment at 379–399 adopts a C4-type zinc-finger fold; the sequence is CKLCKKTKLYYKNPVLYCTKC.

Its subcellular location is the virion. It is found in the host cytoplasm. It localises to the host nucleus. The protein resides in the host cell membrane. Its function is as follows. May act as a packaging protein or as a structural component associated with intranuclear baculovirus virion assembly. The sequence is that of Early 53 kDa protein (ME53) from Autographa californica nuclear polyhedrosis virus (AcMNPV).